The chain runs to 494 residues: 3-octaprenyl-4-hydroxybenzoate carboxy-lyase (494 aa).

N172 serves as a coordination point for Mn(2+). Residues 175–177, 189–191, and 194–195 contribute to the prenylated FMN site; these read IYR, RWL, and RG. E238 serves as a coordination point for Mn(2+). D287 functions as the Proton donor in the catalytic mechanism.

It belongs to the UbiD family. In terms of assembly, homohexamer. It depends on prenylated FMN as a cofactor. Mn(2+) serves as cofactor.

Its subcellular location is the cell membrane. It carries out the reaction a 4-hydroxy-3-(all-trans-polyprenyl)benzoate + H(+) = a 2-(all-trans-polyprenyl)phenol + CO2. It participates in cofactor biosynthesis; ubiquinone biosynthesis. Functionally, catalyzes the decarboxylation of 3-octaprenyl-4-hydroxy benzoate to 2-octaprenylphenol, an intermediate step in ubiquinone biosynthesis. In Cronobacter sakazakii (strain ATCC BAA-894) (Enterobacter sakazakii), this protein is 3-octaprenyl-4-hydroxybenzoate carboxy-lyase.